The following is an 865-amino-acid chain: Protein translocase subunit SecA (865 aa).

ATP-binding positions include Q93, 111–115 (GEGKT), and D501. Residues C841, C843, C852, and C853 each contribute to the Zn(2+) site.

This sequence belongs to the SecA family. As to quaternary structure, monomer and homodimer. Part of the essential Sec protein translocation apparatus which comprises SecA, SecYEG and auxiliary proteins SecDF-YajC and YidC. The cofactor is Zn(2+).

The protein resides in the cell inner membrane. Its subcellular location is the cytoplasm. It catalyses the reaction ATP + H2O + cellular proteinSide 1 = ADP + phosphate + cellular proteinSide 2.. In terms of biological role, part of the Sec protein translocase complex. Interacts with the SecYEG preprotein conducting channel. Has a central role in coupling the hydrolysis of ATP to the transfer of proteins into and across the cell membrane, serving as an ATP-driven molecular motor driving the stepwise translocation of polypeptide chains across the membrane. The polypeptide is Protein translocase subunit SecA (Helicobacter pylori (strain Shi470)).